The chain runs to 239 residues: Cysteine-rich venom protein (239 aa).

The first 19 residues, Met-1–Gly-19, serve as a signal peptide directing secretion. Residues Asp-39–Tyr-166 form the SCP domain. Cystine bridges form between Cys-75–Cys-153, Cys-92–Cys-167, Cys-148–Cys-164, Cys-186–Cys-193, Cys-189–Cys-198, Cys-202–Cys-234, Cys-211–Cys-228, and Cys-219–Cys-232. The region spanning Cys-202–Cys-234 is the ShKT domain.

The protein belongs to the CRISP family. As to expression, expressed by the venom gland.

It is found in the secreted. Its function is as follows. Blocks contraction of smooth muscle elicited by high potassium-induced depolarization, but does not block caffeine-stimulated contraction. May target voltage-gated calcium channels in smooth muscle. This is Cysteine-rich venom protein from Vipera berus (Common European adder).